The sequence spans 261 residues: Glutamate racemase (261 aa).

Residues 7 to 8 (DS) and 39 to 40 (YG) contribute to the substrate site. C71 functions as the Proton donor/acceptor in the catalytic mechanism. 72-73 (NT) contributes to the substrate binding site. Catalysis depends on C184, which acts as the Proton donor/acceptor. 185–186 (TH) provides a ligand contact to substrate.

Belongs to the aspartate/glutamate racemases family.

The catalysed reaction is L-glutamate = D-glutamate. The protein operates within cell wall biogenesis; peptidoglycan biosynthesis. Its function is as follows. Provides the (R)-glutamate required for cell wall biosynthesis. This is Glutamate racemase from Aliarcobacter butzleri (strain RM4018) (Arcobacter butzleri).